We begin with the raw amino-acid sequence, 95 residues long: Aspartyl/glutamyl-tRNA(Asn/Gln) amidotransferase subunit C (95 aa).

Belongs to the GatC family. As to quaternary structure, heterotrimer of A, B and C subunits.

The catalysed reaction is L-glutamyl-tRNA(Gln) + L-glutamine + ATP + H2O = L-glutaminyl-tRNA(Gln) + L-glutamate + ADP + phosphate + H(+). It catalyses the reaction L-aspartyl-tRNA(Asn) + L-glutamine + ATP + H2O = L-asparaginyl-tRNA(Asn) + L-glutamate + ADP + phosphate + 2 H(+). Its function is as follows. Allows the formation of correctly charged Asn-tRNA(Asn) or Gln-tRNA(Gln) through the transamidation of misacylated Asp-tRNA(Asn) or Glu-tRNA(Gln) in organisms which lack either or both of asparaginyl-tRNA or glutaminyl-tRNA synthetases. The reaction takes place in the presence of glutamine and ATP through an activated phospho-Asp-tRNA(Asn) or phospho-Glu-tRNA(Gln). The sequence is that of Aspartyl/glutamyl-tRNA(Asn/Gln) amidotransferase subunit C from Vesicomyosocius okutanii subsp. Calyptogena okutanii (strain HA).